We begin with the raw amino-acid sequence, 177 residues long: uncharacterized protein (177 aa).

4 consecutive transmembrane segments (helical) span residues 20–42, 62–84, 94–116, and 136–158; these read NLVS…LLAL, VVLW…VSLS, AMSS…GYFI, and GLLY…IIVA.

It is found in the cell membrane. This is an uncharacterized protein from Methanocaldococcus jannaschii (strain ATCC 43067 / DSM 2661 / JAL-1 / JCM 10045 / NBRC 100440) (Methanococcus jannaschii).